The sequence spans 187 residues: Dihydrofolate reductase (187 aa).

Residues 4–185 (PLNCIVAVSQ…IKYKFEVYEK (182 aa)) form the DHFR domain. Residues Ala-10 and 16–22 (GIGKNGD) each bind NADP(+). Residue 31–36 (EFQYFQ) participates in substrate binding. 55–57 (RKT) is an NADP(+) binding site. Arg-71 lines the substrate pocket. NADP(+) is bound by residues 77 to 79 (SRE) and 117 to 124 (GGSSVYKE).

This sequence belongs to the dihydrofolate reductase family. In terms of assembly, homodimer.

The protein resides in the mitochondrion. It is found in the cytoplasm. The catalysed reaction is (6S)-5,6,7,8-tetrahydrofolate + NADP(+) = 7,8-dihydrofolate + NADPH + H(+). It functions in the pathway cofactor biosynthesis; tetrahydrofolate biosynthesis; 5,6,7,8-tetrahydrofolate from 7,8-dihydrofolate: step 1/1. In terms of biological role, key enzyme in folate metabolism. Contributes to the de novo mitochondrial thymidylate biosynthesis pathway. Catalyzes an essential reaction for de novo glycine and purine synthesis, and for DNA precursor synthesis. Binds its own mRNA and that of DHFR2. This chain is Dihydrofolate reductase (DHFR), found in Bos taurus (Bovine).